The primary structure comprises 159 residues: Cell number regulator 4 (159 aa).

Residues 52–74 (LAGLLYCLLLHAGVAVVPCHCIY) traverse the membrane as a helical segment.

It belongs to the cornifelin family. As to expression, expressed in roots, coleoptiles, leaves, stalks, apical meristems, immature ears, endosperm, pericarp and tassel spikelets.

It localises to the membrane. The sequence is that of Cell number regulator 4 (CNR4) from Zea mays (Maize).